A 529-amino-acid chain; its full sequence is Cytochrome P450 monooxygenase 136 (529 aa).

A helical transmembrane segment spans residues 9 to 29 (SPLALAVLSIATCQLALVWWY). C447 is a heme binding site.

It belongs to the cytochrome P450 family. Requires heme as cofactor.

It is found in the membrane. It participates in secondary metabolite biosynthesis. Cytochrome P450 monooxygenase that is able to use delta(6)-protoilludene as a substrate to produce delta(6)-protoilludene-5-ol. The protein is Cytochrome P450 monooxygenase 136 of Postia placenta (strain ATCC 44394 / Madison 698-R) (Brown rot fungus).